Consider the following 147-residue polypeptide: UPF0306 protein YhbP (147 aa).

The protein belongs to the UPF0306 family.

The protein is UPF0306 protein YhbP of Escherichia coli O157:H7.